The following is a 509-amino-acid chain: Sperm-associated antigen 6 (509 aa).

8 ARM repeats span residues 31–70 (PQNIETLQNAGVMSLLRTLLLDVVPTIQQTAALALGRLAN), 73–112 (DDLAEAVVKCDILPQLVYSLAEQNRFYKKAAAFVLRAVGK), 115–154 (PQLAQAIVDCGALDTLVICLEDFDPGVKEAAAWALRYIAR), 157–196 (AELSQAVVDAGAVPLLVLCIQEPEIALKRIAASALSDIAK), 199–238 (PELAQTVVDAGAVAHLAQMILNPDAKLKHQILSALSQVSK), 241–280 (VDLAEMVVEAEIFPVVLTCLKDKDEYVKKNASTLIREIAK), 325–365 (ENLA…QIGR), and 368–409 (PEHA…NILQ).

In terms of assembly, interacts with SPAG16 and SPAG17. In terms of tissue distribution, highly expressed in testis.

The protein resides in the cytoplasm. Its subcellular location is the cytoskeleton. The protein localises to the cell projection. It localises to the cilium. It is found in the flagellum. The protein resides in the cilium axoneme. Its function is as follows. Important for structural integrity of the central apparatus in the sperm tail and for flagellar motility. In Homo sapiens (Human), this protein is Sperm-associated antigen 6 (SPAG6).